The primary structure comprises 485 residues: Glutamyl-tRNA(Gln) amidotransferase subunit A (485 aa).

Active-site charge relay system residues include K79 and S154. The Acyl-ester intermediate role is filled by S178.

It belongs to the amidase family. GatA subfamily. In terms of assembly, heterotrimer of A, B and C subunits.

It catalyses the reaction L-glutamyl-tRNA(Gln) + L-glutamine + ATP + H2O = L-glutaminyl-tRNA(Gln) + L-glutamate + ADP + phosphate + H(+). Allows the formation of correctly charged Gln-tRNA(Gln) through the transamidation of misacylated Glu-tRNA(Gln) in organisms which lack glutaminyl-tRNA synthetase. The reaction takes place in the presence of glutamine and ATP through an activated gamma-phospho-Glu-tRNA(Gln). In Staphylococcus aureus (strain USA300 / TCH1516), this protein is Glutamyl-tRNA(Gln) amidotransferase subunit A.